Consider the following 512-residue polypeptide: ATP synthase subunit alpha (512 aa).

169–176 lines the ATP pocket; sequence GDRQTGKT.

The protein belongs to the ATPase alpha/beta chains family. As to quaternary structure, F-type ATPases have 2 components, CF(1) - the catalytic core - and CF(0) - the membrane proton channel. CF(1) has five subunits: alpha(3), beta(3), gamma(1), delta(1), epsilon(1). CF(0) has three main subunits: a(1), b(2) and c(9-12). The alpha and beta chains form an alternating ring which encloses part of the gamma chain. CF(1) is attached to CF(0) by a central stalk formed by the gamma and epsilon chains, while a peripheral stalk is formed by the delta and b chains.

The protein resides in the cell inner membrane. It carries out the reaction ATP + H2O + 4 H(+)(in) = ADP + phosphate + 5 H(+)(out). Its function is as follows. Produces ATP from ADP in the presence of a proton gradient across the membrane. The alpha chain is a regulatory subunit. The polypeptide is ATP synthase subunit alpha (Rickettsia canadensis (strain McKiel)).